Here is a 611-residue protein sequence, read N- to C-terminus: Inhibitor of apoptosis protein (611 aa).

BIR repeat units follow at residues 30–97, 176–242, and 262–329; these read ELYR…CSFV, EEAR…CPFV, and HEAR…CEYL. Residues Cys299, Cys302, His319, and Cys326 each coordinate Zn(2+). The region spanning 446–536 is the CARD domain; it reads VASDDLSLIR…VLYKDLFVEK (91 aa). Residues 564–599 form an RING-type zinc finger; it reads CKVCMDKEVSIVFIPCGHLVVCKECAPSLRKCPICR.

The protein belongs to the IAP family. Cells of the T-lymphocyte lineage. Found in both cortical and medullary cells of the thymus. Expressed at relatively high levels also in spleen, bursa, intestine and lung and at very low levels in testis, brain and skeletal muscle.

Its subcellular location is the nucleus. The protein resides in the cytoplasm. Its function is as follows. Apoptotic suppressor. This Gallus gallus (Chicken) protein is Inhibitor of apoptosis protein (ITA).